Here is a 314-residue protein sequence, read N- to C-terminus: Homoserine O-succinyltransferase (314 aa).

Residue cysteine 142 is the Acyl-thioester intermediate of the active site. Substrate-binding residues include lysine 163 and serine 192. Residue histidine 235 is the Proton acceptor of the active site. Glutamate 237 is a catalytic residue. Arginine 249 is a binding site for substrate.

This sequence belongs to the MetA family.

It localises to the cytoplasm. It catalyses the reaction L-homoserine + succinyl-CoA = O-succinyl-L-homoserine + CoA. It participates in amino-acid biosynthesis; L-methionine biosynthesis via de novo pathway; O-succinyl-L-homoserine from L-homoserine: step 1/1. Transfers a succinyl group from succinyl-CoA to L-homoserine, forming succinyl-L-homoserine. This chain is Homoserine O-succinyltransferase, found in Shewanella frigidimarina (strain NCIMB 400).